We begin with the raw amino-acid sequence, 338 residues long: tRNA (cytosine(34)-C(5))-methyltransferase, mitochondrial (338 aa).

S-adenosyl-L-methionine contacts are provided by residues 140 to 146 (CAAPGGK), E163, D194, and D212. C266 functions as the Nucleophile in the catalytic mechanism.

This sequence belongs to the class I-like SAM-binding methyltransferase superfamily. RsmB/NOP family.

The protein localises to the mitochondrion matrix. The enzyme catalyses cytidine(34) in mitochondrial tRNA + S-adenosyl-L-methionine = 5-methylcytidine(34) in mitochondrial tRNA + S-adenosyl-L-homocysteine + H(+). Mitochondrial tRNA methyltransferase that mediates methylation of cytosine to 5-methylcytosine (m5C) at position 34 of mt-tRNA(Met). mt-tRNA(Met) methylation at cytosine(34) takes place at the wobble position of the anticodon and initiates the formation of 5-formylcytosine (f(5)c) at this position. mt-tRNA(Met) containing the f(5)c modification at the wobble position enables recognition of the AUA codon in addition to the AUG codon, expanding codon recognition in mitochondrial translation. This chain is tRNA (cytosine(34)-C(5))-methyltransferase, mitochondrial, found in Bos taurus (Bovine).